We begin with the raw amino-acid sequence, 434 residues long: Glutamyl-tRNA reductase (434 aa).

Residues 52–55, Ser115, 120–122, and Gln126 each bind substrate; these read TCNR and ETQ. Cys53 functions as the Nucleophile in the catalytic mechanism. 195-200 serves as a coordination point for NADP(+); it reads GAGEMI.

It belongs to the glutamyl-tRNA reductase family. Homodimer.

It carries out the reaction (S)-4-amino-5-oxopentanoate + tRNA(Glu) + NADP(+) = L-glutamyl-tRNA(Glu) + NADPH + H(+). The protein operates within porphyrin-containing compound metabolism; protoporphyrin-IX biosynthesis; 5-aminolevulinate from L-glutamyl-tRNA(Glu): step 1/2. Catalyzes the NADPH-dependent reduction of glutamyl-tRNA(Glu) to glutamate 1-semialdehyde (GSA). The protein is Glutamyl-tRNA reductase of Cupriavidus pinatubonensis (strain JMP 134 / LMG 1197) (Cupriavidus necator (strain JMP 134)).